Reading from the N-terminus, the 133-residue chain is MHQLIREIEQKYLPQDIPEFKVGDTVRLHLKVKEGEKERTQIFEGLVIRVRGSGTGKTFTVRKVSYGVGMERIFPIACPSIQKIEVVKRGKVRRAKLYYIRNLKGKAAKIKELKEWEIKKRQAESQASKENNG.

The protein belongs to the bacterial ribosomal protein bL19 family.

Its function is as follows. This protein is located at the 30S-50S ribosomal subunit interface and may play a role in the structure and function of the aminoacyl-tRNA binding site. The protein is Large ribosomal subunit protein bL19 of Sulfurihydrogenibium sp. (strain YO3AOP1).